A 577-amino-acid polypeptide reads, in one-letter code: Anthranilate synthase alpha subunit 1, chloroplastic (577 aa).

The transit peptide at 1–34 directs the protein to the chloroplast; that stretch reads MASLVLSLRIAPSTPPLGLGGGRFRGRRGAVACR.

Belongs to the anthranilate synthase component I family. As to quaternary structure, heterotetramer consisting of two non-identical subunits: a beta subunit and a large alpha subunit.

It localises to the plastid. It is found in the chloroplast. The enzyme catalyses chorismate + L-glutamine = anthranilate + pyruvate + L-glutamate + H(+). Its pathway is amino-acid biosynthesis; L-tryptophan biosynthesis; L-tryptophan from chorismate: step 1/5. Its activity is regulated as follows. Feedback inhibition by tryptophan. Its function is as follows. Part of a heterotetrameric complex that catalyzes the two-step biosynthesis of anthranilate, an intermediate in the biosynthesis of L-tryptophan. In the first step, the glutamine-binding beta subunit of anthranilate synthase (AS) provides the glutamine amidotransferase activity which generates ammonia as a substrate that, along with chorismate, is used in the second step, catalyzed by the large alpha subunit of AS to produce anthranilate. This Oryza sativa subsp. indica (Rice) protein is Anthranilate synthase alpha subunit 1, chloroplastic (ASA1).